A 466-amino-acid polypeptide reads, in one-letter code: MKTKPLPTAPMAWAESAVETTTGPRELAGHAPLRRVLRPPIARRDGPVLLGDRAPRRTASTMWLLGIDPAESSPGTRATRDDTEQAVDKILRGARRAGGLTVPGAPRYHLTRQVTLTDLCQPNAERAGALLLALRHPTDLPHLARHRAPPGRQTERLAEAWGQLLEASALGSGRAESGCARAGLVSFNFLVAACAAAYDARDAAEAVRAHITTNYGGTRAGARLDRFSECLRAMVHTHVFPHEVMRFFGGLVSWVTQDELASVTAVCSGPQEATHTGHPGRPRSAVTIPACAFVDLDAELCLGGPGAAFLYLVFTYRQCRDQELCCVYVVKSQLPPRGLEAALERLFGRLRITNTIHGAEDMTPPPPNRNVDFPLAVLAASSQSPRCSASQVTNPQFVDRLYRWQPDLRGRPTARTCTYAAFAELGVMPDDSPRCLHRTERFGAVGVPVVILEGVVWRPGGWRACA.

The segment at methionine 1–glycine 29 is disordered.

Belongs to the herpesviridae TRX1 protein family. Interacts with TRX2, MCP and capsid vertex component 2/CVC2.

The protein resides in the virion. The protein localises to the host nucleus. Its function is as follows. Structural component of the T=16 icosahedral capsid. The capsid is composed of pentamers and hexamers of major capsid protein/MCP, which are linked together by heterotrimers called triplexes. These triplexes are formed by a single molecule of triplex protein 1/TRX1 and two copies of triplex protein 2/TRX2. Additionally, TRX1 is required for efficient transport of TRX2 to the nucleus, which is the site of capsid assembly. This chain is Triplex capsid protein 1, found in Homo sapiens (Human).